The sequence spans 189 residues: Protein GrpE (189 aa).

Polar residues predominate over residues 1–20; it reads MSDQQHSAPQNAAATASPSD. The segment at 1–29 is disordered; the sequence is MSDQQHSAPQNAAATASPSDSPEAVEATM.

This sequence belongs to the GrpE family. As to quaternary structure, homodimer.

It is found in the cytoplasm. Functionally, participates actively in the response to hyperosmotic and heat shock by preventing the aggregation of stress-denatured proteins, in association with DnaK and GrpE. It is the nucleotide exchange factor for DnaK and may function as a thermosensor. Unfolded proteins bind initially to DnaJ; upon interaction with the DnaJ-bound protein, DnaK hydrolyzes its bound ATP, resulting in the formation of a stable complex. GrpE releases ADP from DnaK; ATP binding to DnaK triggers the release of the substrate protein, thus completing the reaction cycle. Several rounds of ATP-dependent interactions between DnaJ, DnaK and GrpE are required for fully efficient folding. This chain is Protein GrpE, found in Paracidovorax citrulli (strain AAC00-1) (Acidovorax citrulli).